Consider the following 335-residue polypeptide: uncharacterized protein (335 aa).

Solcar repeat units follow at residues Val22–Leu129, Gly134–Phe227, and Lys244–Tyr327. Transmembrane regions (helical) follow at residues Met28 to Val48, Gly104 to Tyr123, Trp133 to Val154, Gly195 to Trp219, Leu246 to Leu263, and Cys307 to Leu323.

This sequence belongs to the mitochondrial carrier (TC 2.A.29) family.

The protein localises to the mitochondrion inner membrane. This is an uncharacterized protein from Schizosaccharomyces pombe (strain 972 / ATCC 24843) (Fission yeast).